We begin with the raw amino-acid sequence, 62 residues long: Large ribosomal subunit protein bL28 (62 aa).

The disordered stretch occupies residues 1–27; that stretch reads MAKECVITGRKSRSGNKRSHAMNSSKR. The segment covering 10–20 has biased composition (basic residues); the sequence is RKSRSGNKRSH.

Belongs to the bacterial ribosomal protein bL28 family.

The chain is Large ribosomal subunit protein bL28 from Listeria innocua serovar 6a (strain ATCC BAA-680 / CLIP 11262).